The sequence spans 25 residues: Chrysophsin-1 (25 aa).

His-25 bears the Histidine amide mark.

Gill. Localized in certain epithelial cells lining the surface of secondary lamellae and eosinophilic granule cell-like cells at the base of secondary lamellae.

It localises to the secreted. Functionally, has antibacterial activity against Gram-positive bacteria B.subtilis ATCC 6633, L.garvieae ATCC 49156 and S.iniae F-8502, and Gram-negative bacteria E.coli WT-2, V.anguillarum ATCC 19264, V.penaeicida KHA, V.harveyi ATCC 14126, V.vulnificus ATCC 33148, A.salmonicida NCMB 1102 and P.putida ATCC 12633. Has hemolytic activity against human red blood cells. Seems to disrupt the membranes by adopting an alpha helical conformation. May play a significant role in innate host defense. In Pagrus major (Red sea bream), this protein is Chrysophsin-1.